The primary structure comprises 430 residues: Sphingosine-1-phosphate phosphatase 1 (430 aa).

The disordered stretch occupies residues 34 to 100 (GSPKAGEDAE…PRRAGSLRRN (67 aa)). S101 carries the phosphoserine modification. T103 carries the phosphothreonine modification. 4 helical membrane-spanning segments follow: residues 121–141 (FCFG…PFWI), 152–172 (LVII…IIRW), 193–213 (MPST…LLTY), and 216–236 (WQYP…LVCL). Positions 167-175 (KDIIRWPRP) are phosphatase sequence motif I. The tract at residues 194-197 (PSTH) is phosphatase sequence motif II. The active-site Proton donor is H197. Residues 237-248 (SRIYMGMHSILD) form a phosphatase sequence motif III region. H244 functions as the Nucleophile in the catalytic mechanism. A run of 5 helical transmembrane segments spans residues 246-266 (ILDV…FYPL), 279-299 (YAPL…FTLD), 311-331 (ILGS…LGIS), 348-368 (VTLF…VLFV), and 409-429 (YGTV…FIGI).

Belongs to the type 2 lipid phosphate phosphatase family.

It localises to the endoplasmic reticulum membrane. Its subcellular location is the cell membrane. The catalysed reaction is sphinganine 1-phosphate + H2O = sphinganine + phosphate. It catalyses the reaction sphing-4-enine 1-phosphate + H2O = sphing-4-enine + phosphate. Its function is as follows. Specifically dephosphorylates sphingosine 1-phosphate (S1P), dihydro-S1P, and phyto-S1P. Does not act on ceramide 1-phosphate, lysophosphatidic acid or phosphatidic acid. Sphingosine-1-phosphate phosphatase activity is needed for efficient recycling of sphingosine into the sphingolipid synthesis pathway. Regulates the intracellular levels of the bioactive sphingolipid metabolite S1P that regulates diverse biological processes acting both as an extracellular receptor ligand or as an intracellular second messenger. Involved in efficient ceramide synthesis from exogenous sphingoid bases. Converts S1P to sphingosine, which is readily metabolized to ceramide via ceramide synthase. In concert with sphingosine kinase 2 (SphK2), recycles sphingosine into ceramide through a phosphorylation/dephosphorylation cycle. Regulates endoplasmic-to-Golgi trafficking of ceramides, resulting in the regulation of ceramide levels in the endoplasmic reticulum, preferentially long-chain ceramide species, and influences the anterograde membrane transport of both ceramide and proteins from the endoplasmic reticulum to the Golgi apparatus. The modulation of intracellular ceramide levels in turn regulates apoptosis. Via S1P levels, modulates resting tone, intracellular Ca(2+) and myogenic vasoconstriction in resistance arteries. Also involved in unfolded protein response (UPR) and ER stress-induced autophagy via regulation of intracellular S1P levels. Involved in the regulation of epidermal homeostasis and keratinocyte differentiation. The chain is Sphingosine-1-phosphate phosphatase 1 from Rattus norvegicus (Rat).